The following is a 111-amino-acid chain: Ig kappa chain V-III region PC 2880/PC 1229 (111 aa).

Residues 1-23 (DIVLTQSPASLAVSLGQRATISC) are framework-1. Cys23 and Cys92 are oxidised to a cystine. Positions 24–38 (RASESVDNYGISFMN) are complementarity-determining-1. The segment at 39–53 (WFQQKPGQPPKLLIY) is framework-2. Positions 54 to 60 (AASNQGS) are complementarity-determining-2. The tract at residues 61–92 (GVPARFSGSGSGTDFSLNIHPMEEDDTAMYFC) is framework-3. Positions 93–101 (QQSKEVPWT) are complementarity-determining-3. Positions 102-111 (FGGGTKLEIK) are framework-4.

This Mus musculus (Mouse) protein is Ig kappa chain V-III region PC 2880/PC 1229.